A 397-amino-acid polypeptide reads, in one-letter code: Penicillopepsin-1 (397 aa).

Positions 1–20 are cleaved as a signal peptide; it reads MVVFSQVTVALTCFSAIASA. Residues 21-71 constitute a propeptide, activation peptide; it reads AAVRQEPPQGFTVNQVQKAVPGTRTVNLPGLYANALVKYGATVPATVHAAA. In terms of domain architecture, Peptidase A1 spans 87–394; the sequence is YLTPVTIGSS…DSEGPRLGFA (308 aa). Active-site residues include Asp103 and Asp285. The N-linked (GlcNAc...) asparagine glycan is linked to Asn311. Cys322 and Cys357 are joined by a disulfide.

Belongs to the peptidase A1 family. Monomer.

It is found in the secreted. It carries out the reaction Hydrolysis of proteins with broad specificity similar to that of pepsin A, preferring hydrophobic residues at P1 and P1', but also cleaving 20-Gly-|-Glu-21 in the B chain of insulin. Clots milk, and activates trypsinogen.. Functionally, secreted aspartic endopeptidase that allows assimilation of proteinaceous substrates. The scissile peptide bond is attacked by a nucleophilic water molecule activated by two aspartic residues in the active site. Shows a broad primary substrate specificity. Favors hydrophobic residues at the P1 and P1' positions, but can also activate trypsinogen and hydrolyze the B chain of insulin between positions 'Gly-20' and 'Glu-21'. The chain is Penicillopepsin-1 from Penicillium roqueforti.